Here is a 168-residue protein sequence, read N- to C-terminus: Cell division inhibitor SulA (168 aa).

The interval 106–112 (ALLTGNY) is ftsZ binding. Positions 161 to 168 (KIHSYLYH) are lon protease binding.

This sequence belongs to the SulA family. In terms of assembly, interacts with FtsZ. Is rapidly cleaved and degraded by the Lon protease once DNA damage is repaired.

Functionally, component of the SOS system and an inhibitor of cell division. Accumulation of SulA causes rapid cessation of cell division and the appearance of long, non-septate filaments. In the presence of GTP, binds a polymerization-competent form of FtsZ in a 1:1 ratio, thus inhibiting FtsZ polymerization and therefore preventing it from participating in the assembly of the Z ring. This mechanism prevents the premature segregation of damaged DNA to daughter cells during cell division. This Yersinia pestis bv. Antiqua (strain Antiqua) protein is Cell division inhibitor SulA.